A 60-amino-acid chain; its full sequence is Large ribosomal subunit protein uL30 (60 aa).

The protein belongs to the universal ribosomal protein uL30 family. Part of the 50S ribosomal subunit.

The chain is Large ribosomal subunit protein uL30 from Staphylococcus epidermidis (strain ATCC 35984 / DSM 28319 / BCRC 17069 / CCUG 31568 / BM 3577 / RP62A).